The following is a 579-amino-acid chain: Potassium-transporting ATPase potassium-binding subunit (579 aa).

Transmembrane regions (helical) follow at residues 2 to 22 (MNLV…AIPL), 66 to 86 (SFSV…IHIF), 135 to 155 (GLTV…FALI), 177 to 197 (VLYI…SQGV), 262 to 282 (LSNL…CFTF), 292 to 312 (GIAI…IIGV), 391 to 411 (VFGG…LAVF), 437 to 457 (VLVC…ASIL), 490 to 510 (FAGF…SMLF), and 546 to 566 (FIGL…FPAL).

The protein belongs to the KdpA family. As to quaternary structure, the system is composed of three essential subunits: KdpA, KdpB and KdpC.

It localises to the cell membrane. Its function is as follows. Part of the high-affinity ATP-driven potassium transport (or Kdp) system, which catalyzes the hydrolysis of ATP coupled with the electrogenic transport of potassium into the cytoplasm. This subunit binds the extracellular potassium ions and delivers the ions to the membrane domain of KdpB through an intramembrane tunnel. In Clostridium botulinum (strain Alaska E43 / Type E3), this protein is Potassium-transporting ATPase potassium-binding subunit.